Here is a 97-residue protein sequence, read N- to C-terminus: Co-chaperonin GroES (97 aa).

The protein belongs to the GroES chaperonin family. In terms of assembly, heptamer of 7 subunits arranged in a ring. Interacts with the chaperonin GroEL.

It localises to the cytoplasm. Functionally, together with the chaperonin GroEL, plays an essential role in assisting protein folding. The GroEL-GroES system forms a nano-cage that allows encapsulation of the non-native substrate proteins and provides a physical environment optimized to promote and accelerate protein folding. GroES binds to the apical surface of the GroEL ring, thereby capping the opening of the GroEL channel. The sequence is that of Co-chaperonin GroES from Wigglesworthia glossinidia brevipalpis.